Consider the following 418-residue polypeptide: D-amino acid dehydrogenase (418 aa).

FAD is bound at residue 3–17; it reads VLVLGAGVVGTTSAW.

This sequence belongs to the DadA oxidoreductase family. The cofactor is FAD.

The enzyme catalyses a D-alpha-amino acid + A + H2O = a 2-oxocarboxylate + AH2 + NH4(+). Its pathway is amino-acid degradation; D-alanine degradation; NH(3) and pyruvate from D-alanine: step 1/1. Functionally, oxidative deamination of D-amino acids. The chain is D-amino acid dehydrogenase from Dechloromonas aromatica (strain RCB).